The following is a 379-amino-acid chain: Cytochrome b (379 aa).

4 consecutive transmembrane segments (helical) span residues 33 to 53 (FGSL…FLAM), 77 to 98 (WLIR…FIHV), 113 to 133 (WNIG…GYVL), and 178 to 198 (FFAF…VHLL). Positions 83 and 97 each coordinate heme b. Residues His182 and His196 each coordinate heme b. A ubiquinone is bound at residue His201. A run of 4 helical transmembrane segments spans residues 226–246 (IKDL…ALFF), 288–308 (LGGV…PLLN), 320–340 (VTQT…WIGG), and 347–367 (FTMI…VLMP).

This sequence belongs to the cytochrome b family. As to quaternary structure, the cytochrome bc1 complex contains 11 subunits: 3 respiratory subunits (MT-CYB, CYC1 and UQCRFS1), 2 core proteins (UQCRC1 and UQCRC2) and 6 low-molecular weight proteins (UQCRH/QCR6, UQCRB/QCR7, UQCRQ/QCR8, UQCR10/QCR9, UQCR11/QCR10 and a cleavage product of UQCRFS1). This cytochrome bc1 complex then forms a dimer. Heme b is required as a cofactor.

The protein localises to the mitochondrion inner membrane. Its function is as follows. Component of the ubiquinol-cytochrome c reductase complex (complex III or cytochrome b-c1 complex) that is part of the mitochondrial respiratory chain. The b-c1 complex mediates electron transfer from ubiquinol to cytochrome c. Contributes to the generation of a proton gradient across the mitochondrial membrane that is then used for ATP synthesis. This Akodon iniscatus (Intelligent grass mouse) protein is Cytochrome b (MT-CYB).